The sequence spans 1806 residues: SH3 and multiple ankyrin repeat domains protein 3 (1806 aa).

The intramolecular interaction with the ANK repeats stretch occupies residues 76–150 (MDGPGASAVV…KFLDEERLLQ (75 aa)). At Tyr197 the chain carries Phosphotyrosine. ANK repeat units follow at residues 223 to 253 (SGEC…HLDF), 257 to 286 (DGLT…SPDY), 290 to 320 (RGLT…QLGI), 324 to 353 (NGWQ…DMGA), 357 to 386 (SGNT…NRDV), and 390 to 420 (NSQT…DVVP). Basic and acidic residues predominate over residues 407–416 (AEVIKTHKDS). The disordered stretch occupies residues 407–467 (AEVIKTHKDS…AQPAASPGPS (61 aa)). Pro residues predominate over residues 439 to 461 (LASPRPLQRSASDINLKGEAQPA). Phosphoserine is present on residues Ser448, Ser450, Ser463, Ser470, and Ser558. The region spanning 546–605 (VPGRKFIAVKAHSPQGEGEIPLHRGEAVKVLSIGEGGFWEGTVKGRTGWFPADCVEEVQM) is the SH3 domain. Tyr631 bears the Phosphotyrosine mark. Positions 646-740 (VAVLQKRDHE…RLVMKVVSVT (95 aa)) constitute a PDZ domain. 2 disordered regions span residues 665-689 (KAET…ESVD) and 760-853 (PSTT…KGIP). The segment at 753–760 (PPPPKRAP) is required for interaction with ABI1. Position 770 is a phosphoserine (Ser770). Over residues 813–845 (ATVKQRPTSRRITPAEISSLFERQGLPGPEKLP) the composition is skewed to pro residues. 3 positions are modified to phosphoserine: Ser857, Ser866, and Ser877. Residues 871–1021 (RFPRSTSMQD…FSASLFAPSK (151 aa)) form a disordered region. Positions 906–915 (DSGPPPAFSP) are enriched in pro residues. 2 positions are modified to phosphoserine: Ser966 and Ser973. Thr988 carries the phosphothreonine modification. The span at 993–1013 (PKRRPRPPGPDSPYANLGAFS) shows a compositional bias: gly residues. Tyr1006 bears the Phosphotyrosine mark. At Arg1041 the chain carries Asymmetric dimethylarginine. Low complexity predominate over residues 1115–1124 (PGADLPSLQP). 3 disordered regions span residues 1115–1460 (PGAD…MSTL), 1475–1525 (ADGH…HHAA), and 1546–1584 (SKLW…KDTR). Basic and acidic residues predominate over residues 1173-1193 (TGKPLDPSSPLALALAARERA). A Phosphothreonine modification is found at Thr1204. A phosphoserine mark is found at Ser1208, Ser1233, Ser1237, and Ser1240. Over residues 1251-1261 (EAEKVPREERK) the composition is skewed to pro residues. A Phosphothreonine modification is found at Thr1309. Ser1328 bears the Phosphoserine mark. Residues 1360 to 1370 (LPPAQLSSSDE) show a composition bias toward basic and acidic residues. Composition is skewed to low complexity over residues 1371 to 1392 (ETRE…ANGV) and 1444 to 1460 (HLET…MSTL). The SH3-binding signature appears at 1485-1491 (PPVPPKP). Ser1495 carries the post-translational modification Phosphoserine. The segment covering 1495-1505 (SPLGKGPVTFR) has biased composition (polar residues). Positions 1569 to 1589 (ISELSSRLQQLNKDTRSLGEE) form a coiled coil. A phosphoserine mark is found at Ser1585, Ser1596, Ser1604, and Ser1614. The segment covering 1627–1637 (PGGPGGGASYS) has biased composition (low complexity). The disordered stretch occupies residues 1627–1664 (PGGPGGGASYSVRPSGRYPVARRAPSPVKPASLERVEG). A compositionally biased stretch (pro residues) spans 1638–1657 (VRPSGRYPVARRAPSPVKPA). Ser1709, Ser1711, and Ser1713 each carry phosphoserine. In terms of domain architecture, SAM spans 1743–1806 (WSKFDVGDWL…ERALRQLDGS (64 aa)).

As to quaternary structure, may homomultimerize via its SAM domain. Interacts with BAIAP2, DBNL and SLC17A7/VGLUT1. Interacts with DLGAP1/GKAP, GRM1/MGLUR1, GRM5/MGLUR5 and LZTS3 C-termini via its PDZ domain. Interacts with ABI1, HOMER1, HOMER2, HOMER3 and CTTN/cortactin SH3 domain. Is part of a complex with DLG4/PSD-95 and DLGAP1/GKAP. Interacts (via PDZ domain) with the GRIA1 subunit of the AMPA receptor (via PDZ-binding motif). Interacts with WASF1 and CYFIP2; the interactions mediate the association of SHANK3 with the WAVE1 complex. Interacts with ARPC2; the interaction probably mediates the association of SHANK3 with the Arp2/3 complex. Interacts (via ANK repeats) with SHARPIN and SPTAN1. Interacts (via PDZ domain) with ARHGAP44 (probably via PDZ-binding motif); the interaction takes place in dendritic spines and promotes GRIA1 exocytosis. Interacts with CAMK2A. Interacts with DIP2A. Interacts with ADGRL3. As to expression, expressed in the cerebral cortex and the cerebellum.

It is found in the cytoplasm. The protein localises to the postsynaptic density. The protein resides in the cell projection. Its subcellular location is the dendritic spine. In terms of biological role, major scaffold postsynaptic density protein which interacts with multiple proteins and complexes to orchestrate the dendritic spine and synapse formation, maturation and maintenance. Interconnects receptors of the postsynaptic membrane including NMDA-type and metabotropic glutamate receptors via complexes with GKAP/PSD-95 and HOMER, respectively, and the actin-based cytoskeleton. Plays a role in the structural and functional organization of the dendritic spine and synaptic junction through the interaction with Arp2/3 and WAVE1 complex as well as the promotion of the F-actin clusters. By way of this control of actin dynamics, participates in the regulation of developing neurons growth cone motility and the NMDA receptor-signaling. Also modulates GRIA1 exocytosis and GRM5/MGLUR5 expression and signaling to control the AMPA and metabotropic glutamate receptor-mediated synaptic transmission and plasticity. May be required at an early stage of synapse formation and be inhibited by IGF1 to promote synapse maturation. The protein is SH3 and multiple ankyrin repeat domains protein 3 (SHANK3) of Homo sapiens (Human).